Reading from the N-terminus, the 386-residue chain is IgA receptor (386 aa).

An N-terminal signal peptide occupies residues 1–41 (MARKDTNKQYSLRKLKTGTASVAVAVAVLGAGFANQTEVKA). Positions 42–152 (AEIKKPQADS…QKKHQQEQQQ (111 aa)) are igA-binding. Composition is skewed to basic and acidic residues over residues 79–88 (YADDKEKDPQ), 97–128 (QDLRKREGQYQDKIEELEKERKEKQERQEQLE), 134–166 (EADKHYQEQQKKHQQEQQQLEAEKQKLAKDKQI), 174–201 (LSRDLEASRAAKKELEAEHQKLKEEKQI), 209–221 (LSRDLEASREAKK), 233–243 (EHQKLKEDKQI), and 251–267 (LSRDLEASREAKKKVEA). Disordered regions lie at residues 79 to 221 (YADD…EAKK) and 233 to 268 (EHQKLKEDKQISDASRQGLSRDLEASREAKKKVEAD). C repeat units lie at residues 158–192 (QKLAKDKQISDASRQGLSRDLEASRAAKKELEAEH), 193–227 (QKLKEEKQISDASRQGLSRDLEASREAKKKVEADL), and 235–269 (QKLKEDKQISDASRQGLSRDLEASREAKKKVEADL). 4 D repeats span residues 302 to 307 (ARLEAE), 308 to 313 (AKALKE), 316 to 321 (AKQAEE), and 323 to 328 (AKLKGN). The interval 323–360 (AKLKGNQTPNAKVAPQANRSRSAMTQQKRTLPSTGETA) is disordered. The segment covering 339 to 359 (ANRSRSAMTQQKRTLPSTGET) has biased composition (polar residues). An LPXTG sorting signal motif is present at residues 353–357 (LPSTG). T356 is modified (pentaglycyl murein peptidoglycan amidated threonine). A propeptide spans 357 to 386 (GETANPFFTAAAATVMVSAGMLALKRKEEN) (removed by sortase).

The protein belongs to the M protein family.

The protein resides in the secreted. The protein localises to the cell wall. Its function is as follows. Binds IgA of both subclasses, and also binds polyclonal IgG weakly. The protein is IgA receptor (arp4) of Streptococcus pyogenes.